Consider the following 208-residue polypeptide: Small ribosomal subunit protein eS8 (208 aa).

Belongs to the eukaryotic ribosomal protein eS8 family. In terms of assembly, component of the small ribosomal subunit. Identified in a IGF2BP1-dependent mRNP granule complex containing untranslated mRNAs. Part of the small subunit (SSU) processome, composed of more than 70 proteins and the RNA chaperone small nucleolar RNA (snoRNA) U3.

It localises to the cytoplasm. The protein resides in the membrane. It is found in the nucleus. The protein localises to the nucleolus. Functionally, component of the small ribosomal subunit. The ribosome is a large ribonucleoprotein complex responsible for the synthesis of proteins in the cell. Part of the small subunit (SSU) processome, first precursor of the small eukaryotic ribosomal subunit. During the assembly of the SSU processome in the nucleolus, many ribosome biogenesis factors, an RNA chaperone and ribosomal proteins associate with the nascent pre-rRNA and work in concert to generate RNA folding, modifications, rearrangements and cleavage as well as targeted degradation of pre-ribosomal RNA by the RNA exosome. The chain is Small ribosomal subunit protein eS8 (rps-8) from Caenorhabditis elegans.